A 113-amino-acid polypeptide reads, in one-letter code: MSVSVFSVVSRFLDEYVSSTPQRLKLLDAYLLYILLTGALQFLYCLLVGTFPFNSFLSGFISSVGSFILAVCLRIQINPQNKSDFQGISPERAFADFLFANTILHLVVVNFIG.

At 1 to 30 (MSVSVFSVVSRFLDEYVSSTPQRLKLLDAY) the chain is on the cytoplasmic side. The chain crosses the membrane as a helical span at residues 31–51 (LLYILLTGALQFLYCLLVGTF). Residue Pro52 is a topological domain, lumenal. The chain crosses the membrane as a helical span at residues 53 to 73 (FNSFLSGFISSVGSFILAVCL). Over 74–92 (RIQINPQNKSDFQGISPER) the chain is Cytoplasmic. The chain crosses the membrane as a helical span at residues 93 to 113 (AFADFLFANTILHLVVVNFIG).

It belongs to the DAD/OST2 family. Component of the oligosaccharyltransferase (OST) complex.

The protein resides in the endoplasmic reticulum membrane. Its pathway is protein modification; protein glycosylation. In terms of biological role, subunit of the oligosaccharyl transferase (OST) complex that catalyzes the initial transfer of a defined glycan (Glc(3)Man(9)GlcNAc(2) in eukaryotes) from the lipid carrier dolichol-pyrophosphate to an asparagine residue within an Asn-X-Ser/Thr consensus motif in nascent polypeptide chains, the first step in protein N-glycosylation. N-glycosylation occurs cotranslationally and the complex associates with the Sec61 complex at the channel-forming translocon complex that mediates protein translocation across the endoplasmic reticulum (ER). All subunits are required for a maximal enzyme activity. In Xenopus laevis (African clawed frog), this protein is Dolichyl-diphosphooligosaccharide--protein glycosyltransferase subunit dad1.